Consider the following 525-residue polypeptide: GMP synthase [glutamine-hydrolyzing] (525 aa).

Positions 9–207 constitute a Glutamine amidotransferase type-1 domain; the sequence is RILILDFGSQ…VRDICQCEAL (199 aa). Catalysis depends on C86, which acts as the Nucleophile. Residues H181 and E183 contribute to the active site. The GMPS ATP-PPase domain occupies 208–400; it reads WTPAKIIDDA…LGLPYDMLYR (193 aa). 235–241 contributes to the ATP binding site; sequence SGGVDSS.

In terms of assembly, homodimer.

It carries out the reaction XMP + L-glutamine + ATP + H2O = GMP + L-glutamate + AMP + diphosphate + 2 H(+). The protein operates within purine metabolism; GMP biosynthesis; GMP from XMP (L-Gln route): step 1/1. Catalyzes the synthesis of GMP from XMP. This chain is GMP synthase [glutamine-hydrolyzing], found in Klebsiella pneumoniae (strain 342).